A 1393-amino-acid chain; its full sequence is DNA glycosylase/AP lyase ROS1 (1393 aa).

Disordered regions lie at residues Met1–Phe25, Ser98–Arg186, and Leu237–Glu265. A compositionally biased stretch (low complexity) spans Ser98 to Glu108. Over residues Pro117 to Val126 the composition is skewed to basic residues. Composition is skewed to basic and acidic residues over residues Arg127 to Pro138 and Lys162 to Asp171. Residues Pro243–Gln256 show a composition bias toward basic residues. The segment at Lys528–Pro626 is DEMETER. Over residues Glu653–Thr672 the composition is skewed to polar residues. Disordered regions lie at residues Glu653 to Val722 and Ser789 to Gln830. Residues Ser687–His698 show a composition bias toward low complexity. Residues Glu699–Val722 show a composition bias toward basic and acidic residues. The span at Lys816–Gln830 shows a compositional bias: polar residues. Lys901 participates in a covalent cross-link: Glycyl lysine isopeptide (Lys-Gly) (interchain with G-Cter in ubiquitin). Residues Cys1038, Cys1045, Cys1048, and Cys1054 each coordinate [4Fe-4S] cluster.

The protein belongs to the DNA glycosylase family. DEMETER subfamily. Interacts (via the central region) with ZDP. Binds to RPA2A. Interacts with XRCC1. Interacts probably with a complex made of MBD7, IDM1, IDM2 and IDM3. Interacts with APE1L. Requires [4Fe-4S] cluster as cofactor. In terms of tissue distribution, expressed ubiquitously in both vegetative and reproductive organs.

The protein resides in the nucleus. It is found in the nucleolus. The enzyme catalyses 2'-deoxyribonucleotide-(2'-deoxyribose 5'-phosphate)-2'-deoxyribonucleotide-DNA = a 3'-end 2'-deoxyribonucleotide-(2,3-dehydro-2,3-deoxyribose 5'-phosphate)-DNA + a 5'-end 5'-phospho-2'-deoxyribonucleoside-DNA + H(+). With respect to regulation, stimulated by ZDP. Stimulated by XRCC1. Functionally, bifunctional DNA glycosylase/lyase, which excises 5-methylcytosine (5-meC) and 5-hydroxymethylcytosine (5-hmeC), leaving an apyrimidinic (AP) site that is subsequently incised by the lyase activity. Generates 3'-phosphor-alpha,beta-unsaturated aldehyde (3'-PUA) as a primary 5-meC excision intermediate. Prevents DNA hypermethylation, specifically in the promoter of otherwise silenced loci. May be involved in DNA repair through its nicking activity on methylated DNA. Binds with similar affinity to both methylated and non-methylated DNA. Highly distributive behavior on DNA substrates containing multiple 5-meC residues. Involved with Pol IV in the remodeling of the 5S rDNA chromatin via DNA methylation modifications during the first days of development post-germination. Participates in UV-B induced- and oxidative DNA damage repair. The polypeptide is DNA glycosylase/AP lyase ROS1 (Arabidopsis thaliana (Mouse-ear cress)).